The following is a 489-amino-acid chain: Long chain base biosynthesis protein 2b (489 aa).

Residues 2–22 (ITIPYLTAVSTYFSYGLLFAF) traverse the membrane as a helical segment. Lys-311 carries the N6-(pyridoxal phosphate)lysine modification.

The protein belongs to the class-II pyridoxal-phosphate-dependent aminotransferase family. As to quaternary structure, heterodimer with LCB1. Component of the serine palmitoyltransferase (SPT) complex, composed of LCB1 and LCB2 (LCB2a or LCB2b). It depends on pyridoxal 5'-phosphate as a cofactor. Ubiquitous with the highest expression in flowers.

The protein resides in the endoplasmic reticulum membrane. It carries out the reaction L-serine + hexadecanoyl-CoA + H(+) = 3-oxosphinganine + CO2 + CoA. Its pathway is lipid metabolism; sphingolipid metabolism. Serine palmitoyltransferase (SPT). The heterodimer formed with LCB1 constitutes the catalytic core. Plays an important role during male gametogenesis and embryogenesis. The protein is Long chain base biosynthesis protein 2b (LCB2b) of Arabidopsis thaliana (Mouse-ear cress).